Consider the following 391-residue polypeptide: Transaldolase (391 aa).

Residue K134 is the Schiff-base intermediate with substrate of the active site. 2 EF-hand domains span residues 329–364 (TLTH…FDAL) and 365–387 (DANH…VLHL). Residues D342, D344, D346, E353, D365, N367, D369, K371, and D376 each contribute to the Ca(2+) site.

Belongs to the transaldolase family. Type 1 subfamily.

Its subcellular location is the cytoplasm. The enzyme catalyses D-sedoheptulose 7-phosphate + D-glyceraldehyde 3-phosphate = D-erythrose 4-phosphate + beta-D-fructose 6-phosphate. It functions in the pathway carbohydrate degradation; pentose phosphate pathway; D-glyceraldehyde 3-phosphate and beta-D-fructose 6-phosphate from D-ribose 5-phosphate and D-xylulose 5-phosphate (non-oxidative stage): step 2/3. Functionally, transaldolase is important for the balance of metabolites in the pentose-phosphate pathway. The chain is Transaldolase from Thermosynechococcus vestitus (strain NIES-2133 / IAM M-273 / BP-1).